The primary structure comprises 299 residues: HTH-type transcriptional regulator PgrR (299 aa).

Residues 4 to 61 (EEIADLMAFVVVAEERSFTRAAARLSMAQSALSQIVRRIEERLGLRLLTRTTRSVVPT) form the HTH lysR-type domain. The H-T-H motif DNA-binding region spans 21–40 (FTRAAARLSMAQSALSQIVR).

This sequence belongs to the LysR transcriptional regulatory family.

In terms of biological role, regulates the expression of genes involved in peptidoglycan (PG) degradation. Could play a role in switch control between recycling and degradation of PG peptides. Negatively regulates the expression of the ycjY-ymjD-ymjC-mpaA operon by binding to the PgrR-box. In addition, other genes are predicted to be under the control of PgrR, including genes related to membrane formation and function. The protein is HTH-type transcriptional regulator PgrR (pgrR) of Escherichia coli (strain K12).